A 306-amino-acid polypeptide reads, in one-letter code: Probable 2-dehydro-3-deoxygalactonokinase DgoK1 (306 aa).

It belongs to the DgoK family.

The catalysed reaction is 2-dehydro-3-deoxy-D-galactonate + ATP = 2-dehydro-3-deoxy-6-phospho-D-galactonate + ADP + H(+). Its pathway is carbohydrate acid metabolism; D-galactonate degradation; D-glyceraldehyde 3-phosphate and pyruvate from D-galactonate: step 2/3. In terms of biological role, involved in the degradation of galactose via the DeLey-Doudoroff pathway. In Rhizobium meliloti (strain 1021) (Ensifer meliloti), this protein is Probable 2-dehydro-3-deoxygalactonokinase DgoK1 (dgoK1).